Here is a 256-residue protein sequence, read N- to C-terminus: Polycomb group RING finger protein 5 (256 aa).

An RING-type zinc finger spans residues 18–57; the sequence is CYICKGYLIKPTTVTECLHTFCKTCIVQHFEDSNDCPRCG. 2 stretches are compositionally biased toward basic and acidic residues: residues 94–103 and 110–120; these read ESEFWKKNKP and DTSKADKPKVD. The interval 94–133 is disordered; it reads ESEFWKKNKPQENGQDDTSKADKPKVDEEGDENEDDKDYH.

In terms of assembly, component of a PRC1-like complex that contains PCGF5, RNF2 and UBE2D3. Interacts with RNF2; the interaction is direct. Interacts with CBX6, CBX7 and CBX8. Interacts with AUTS2; the interaction is direct. Identified in a complex that contains AUTS2, PCGF5, CSNK2B and RNF2.

The protein resides in the nucleus. The protein localises to the nucleoplasm. In terms of biological role, component of a Polycomb group (PcG) multiprotein PRC1-like complex, a complex class required to maintain the transcriptionally repressive state of many genes, including Hox genes, throughout development. PcG PRC1 complex acts via chromatin remodeling and modification of histones; it mediates monoubiquitination of histone H2A 'Lys-119', rendering chromatin heritably changed in its expressibility. Within the PRC1-like complex, regulates RNF2 ubiquitin ligase activity. Plays a redundant role with PCGF3 as part of a PRC1-like complex that mediates monoubiquitination of histone H2A 'Lys-119' on the X chromosome and is required for normal silencing of one copy of the X chromosome in XX females. The sequence is that of Polycomb group RING finger protein 5 (PCGF5) from Homo sapiens (Human).